Reading from the N-terminus, the 124-residue chain is Chemotaxis protein CheY1 (124 aa).

The Response regulatory domain maps to 2 to 120; the sequence is KLLVVDDSST…VLKEKLEVVL (119 aa). Residues Asp-7, Asp-8, Asp-53, and Asn-55 each coordinate Mg(2+). Asp-53 carries the 4-aspartylphosphate modification.

Interacts (when phosphorylated) with FliM. Mg(2+) is required as a cofactor. In terms of processing, phosphorylated by CheAY. Dephosphorylated (inactivated) by CheZ.

Its subcellular location is the cytoplasm. Its function is as follows. Chemotactic response regulator protein that modulates the rotation direction of bacterial flagellar motors. Plays an important role in the colonization and infection of Helicobacter pylori. Upon phosphorylation by CheA, interacts with the flagellar motor protein FliM to cause clockwise flagellar rotation and bacterial reversals, as opposed to straight swimming when CheY1 is not phosphorylated. This chain is Chemotaxis protein CheY1, found in Helicobacter pylori (strain ATCC 700392 / 26695) (Campylobacter pylori).